A 260-amino-acid polypeptide reads, in one-letter code: 3'-5' ssDNA/RNA exonuclease TatD (260 aa).

Residues Glu91, His127, and His152 each coordinate a divalent metal cation.

It belongs to the metallo-dependent hydrolases superfamily. TatD-type hydrolase family. TatD subfamily. In terms of assembly, monomer. Requires Mg(2+) as cofactor.

It is found in the cytoplasm. In terms of biological role, 3'-5' exonuclease that prefers single-stranded DNA and RNA. May play a role in the H(2)O(2)-induced DNA damage repair. The polypeptide is 3'-5' ssDNA/RNA exonuclease TatD (Salmonella typhimurium (strain LT2 / SGSC1412 / ATCC 700720)).